The chain runs to 226 residues: Ribose-5-phosphate isomerase A (226 aa).

Residues T28–T31, D80–D83, and K93–G96 each bind substrate. E102 functions as the Proton acceptor in the catalytic mechanism. Residue K120 participates in substrate binding.

It belongs to the ribose 5-phosphate isomerase family. Homodimer.

It carries out the reaction aldehydo-D-ribose 5-phosphate = D-ribulose 5-phosphate. The protein operates within carbohydrate degradation; pentose phosphate pathway; D-ribose 5-phosphate from D-ribulose 5-phosphate (non-oxidative stage): step 1/1. Its function is as follows. Catalyzes the reversible conversion of ribose-5-phosphate to ribulose 5-phosphate. This chain is Ribose-5-phosphate isomerase A, found in Caulobacter sp. (strain K31).